Reading from the N-terminus, the 189-residue chain is Auxin-responsive protein IAA6 (189 aa).

The EAR-like (transcriptional repression) motif lies at 13 to 17 (LRLGL). Residues 93–178 (IGYVKVSMDG…SCKRLRIVKR (86 aa)) enclose the PB1 domain.

This sequence belongs to the Aux/IAA family. As to quaternary structure, homodimers and heterodimers. Interacts with TPL. In terms of tissue distribution, highly expressed in stems and flowers.

The protein resides in the nucleus. Functionally, aux/IAA proteins are short-lived transcriptional factors that function as repressors of early auxin response genes at low auxin concentrations. Repression is thought to result from the interaction with auxin response factors (ARFs), proteins that bind to the auxin-responsive promoter element (AuxRE). Formation of heterodimers with ARF proteins may alter their ability to modulate early auxin response genes expression. In Arabidopsis thaliana (Mouse-ear cress), this protein is Auxin-responsive protein IAA6 (IAA6).